Here is a 202-residue protein sequence, read N- to C-terminus: uncharacterized protein (202 aa).

The disordered stretch occupies residues 179–202; sequence FDEQDSTPELPPNYLLDSQKKSQG.

This is an uncharacterized protein from Haemophilus influenzae (strain ATCC 51907 / DSM 11121 / KW20 / Rd).